A 398-amino-acid chain; its full sequence is Acetate kinase (398 aa).

N7 is a binding site for Mg(2+). K14 serves as a coordination point for ATP. R91 contributes to the substrate binding site. D148 functions as the Proton donor/acceptor in the catalytic mechanism. Residues 208 to 212, 283 to 285, and 331 to 335 contribute to the ATP site; these read HIGNG, DMR, and GVGEN. E384 is a Mg(2+) binding site.

Belongs to the acetokinase family. As to quaternary structure, homodimer. Mg(2+) serves as cofactor. The cofactor is Mn(2+).

The protein localises to the cytoplasm. The catalysed reaction is acetate + ATP = acetyl phosphate + ADP. It functions in the pathway metabolic intermediate biosynthesis; acetyl-CoA biosynthesis; acetyl-CoA from acetate: step 1/2. Functionally, catalyzes the formation of acetyl phosphate from acetate and ATP. Can also catalyze the reverse reaction. The protein is Acetate kinase of Bacteroides fragilis (strain ATCC 25285 / DSM 2151 / CCUG 4856 / JCM 11019 / LMG 10263 / NCTC 9343 / Onslow / VPI 2553 / EN-2).